The following is a 449-amino-acid chain: Sensor protein QseC (449 aa).

Residues 1–12 are Cytoplasmic-facing; it reads MKFTQRLSLRVR. The helical transmembrane segment at 13-33 threads the bilayer; sequence LTLIFLILASVTWLLSSFVAW. The Periplasmic segment spans residues 34 to 156; the sequence is KQTTDNVDEL…QEWEYREDMA (123 aa). Residues 157–177 form a helical membrane-spanning segment; that stretch reads LAIVAGQLIPWLVALPVMLII. Residues 178–449 lie on the Cytoplasmic side of the membrane; it reads MMVLLGRELA…QGGFEAKVSW (272 aa). The 207-residue stretch at 243–449 folds into the Histidine kinase domain; sequence DAAHELRSPL…QGGFEAKVSW (207 aa). Phosphohistidine; by autocatalysis is present on histidine 246.

It is found in the cell inner membrane. It catalyses the reaction ATP + protein L-histidine = ADP + protein N-phospho-L-histidine.. Its function is as follows. Member of a two-component regulatory system QseB/QseC. Activates the flagella regulon by activating transcription of FlhDC. May activate QseB by phosphorylation. This chain is Sensor protein QseC (qseC), found in Escherichia coli O157:H7.